We begin with the raw amino-acid sequence, 338 residues long: Phenylalanine--tRNA ligase alpha subunit (338 aa).

Glutamate 252 provides a ligand contact to Mg(2+).

Belongs to the class-II aminoacyl-tRNA synthetase family. Phe-tRNA synthetase alpha subunit type 1 subfamily. Tetramer of two alpha and two beta subunits. The cofactor is Mg(2+).

The protein resides in the cytoplasm. It catalyses the reaction tRNA(Phe) + L-phenylalanine + ATP = L-phenylalanyl-tRNA(Phe) + AMP + diphosphate + H(+). This Pseudomonas aeruginosa (strain ATCC 15692 / DSM 22644 / CIP 104116 / JCM 14847 / LMG 12228 / 1C / PRS 101 / PAO1) protein is Phenylalanine--tRNA ligase alpha subunit.